Consider the following 604-residue polypeptide: NRPS-independent siderophore synthetase-like protein ankE (604 aa).

It carries out the reaction cyclo(L-arginyl-(Z)-dehydro-4-O-homoseryl-tyrosyl) + citrate + ATP = NK13650 B + AMP + diphosphate + H(+). The protein operates within secondary metabolite biosynthesis. Functionally, NRPS-independent siderophore synthetase-like protein; part of the ank cluster that mediates the biosynthesis of NK13650 C, a highly modified cyclo-arginine-tyrosine dipeptide. AnkE is responsible of the production of NK13650 B via ligation of citrate to the ankD product. Within the pathway, the cyclodipeptide synthase ankA acts as the scaffold-generating enzyme and is responsible for formation of the cyclo-Arg-Tyr diketopiperazine (cRY) from L-Arg and L-Tyr. The ankA product cRY is desaturated by the cytochrome P450 monooxygenase ankB to yield a dehydro-cyclodipeptide intermediate. The FAD-dependent monooxygenase ankC then installs the m-OH, ankD catalyzes the attachment of L-homoserine, and ankE ligates citrate to the ankD product to yield NK13650 B. The O-methyltransferase ankF is responsible for methylation of the C-17 phenol group of NK13650 B to produce NK13650 D. Amidation of NK13650 D with L-Asp by ankG then leads to the production of NK13650 C, whereas amidation of NK13650 B produces NK13650 A. The sequence is that of NRPS-independent siderophore synthetase-like protein ankE from Aspergillus thermomutatus (Neosartorya pseudofischeri).